Reading from the N-terminus, the 495-residue chain is Pre-glycoprotein polyprotein GP complex (495 aa).

A lipid anchor (N-myristoyl glycine; by host) is attached at Gly2. The Extracellular portion of the chain corresponds to 2 to 17; it reads GQFISFMQEIPIFLQE. A helical transmembrane segment spans residues 18-33; it reads ALNIALVAVSLICIVK. Residues 34 to 58 lie on the Cytoplasmic side of the membrane; the sequence is GLVNLYRCGLFQLMVFLVLAGRSCS. Zn(2+) is bound at residue Cys57. At 59–434 the chain is on the extracellular side; it reads EETFKIGMHT…QGRTPITLVD (376 aa). 4 cysteine pairs are disulfide-bonded: Cys92-Cys236, Cys281-Cys294, Cys303-Cys312, and Cys366-Cys387. N-linked (GlcNAc...) asparagine; by host glycans are attached at residues Asn95 and Asn188. Asn367, Asn375, Asn392, and Asn397 each carry an N-linked (GlcNAc...) asparagine; by host glycan. Residues 435-455 traverse the membrane as a helical segment; it reads ICFWSTVFFTSTLFLHLIGFP. Over 456–495 the chain is Cytoplasmic; it reads THEHIRGEGCPLPHRLNSMGGCRCGKYLPLKKPTIWHRRH. Residues His457, His459, Cys465, His469, Cys477, Cys479, and His495 each coordinate Zn(2+).

Belongs to the arenaviridae GPC protein family. As to quaternary structure, interacts with glycoprotein G2. Part of the GP complex (GP-C) together with glycoprotein G1 and glycoprotein G2. The GP-complex interacts with protein Z, which interacts with ribonucleocapsid; these interactions may induce virion budding. Homotrimer; disulfide-linked. In pre-fusion state, G1 homotrimers bind G2 homotrimers via ionic interactions. Part of the GP complex (GP-C) together with glycoprotein G2 and the stable signal peptide. The GP-complex interacts with protein Z, which interacts with ribonucleocapsid; these interactions may induce virion budding. In terms of assembly, homotrimer. Interacts with the stable signal peptide. In pre-fusion state, G2 homotrimers bind G1 homotrimers via ionic interactions. Part of the GP complex (GP-C) together with glycoprotein G1 and the stable signal peptide. Acidification in the endosome triggers rearrangements, which ultimately leads to a 6 helix bundle formed by the two heptad repeat domains (HR1 and HR2) in post-fusion state. The GP-complex interacts with protein Z, which interacts with ribonucleocapsid; these interactions may induce virion budding. Specific enzymatic cleavages in vivo yield mature proteins. GP-C polyprotein is cleaved in the endoplasmic reticulum by the host protease MBTPS1. Only cleaved glycoprotein is incorporated into virions. In terms of processing, the SSP remains stably associated with the GP complex following cleavage by signal peptidase and plays crucial roles in the trafficking of GP through the secretory pathway. Post-translationally, myristoylation is necessary for GP2-mediated fusion activity.

Its subcellular location is the virion membrane. The protein localises to the host endoplasmic reticulum membrane. It is found in the host Golgi apparatus membrane. The protein resides in the host cell membrane. Functions as a cleaved signal peptide that is retained as the third component of the GP complex (GP-C). Helps to stabilize the spike complex in its native conformation. The SSP is required for efficient glycoprotein expression, post-translational maturation cleavage of G1 and G2, glycoprotein transport to the cell surface plasma membrane, formation of infectious virus particles, and acid pH-dependent glycoprotein-mediated cell fusion. Functionally, forms the virion spikes together with glycoprotein G2. The glycoprotein spike trimers are connected to the underlying matrix. Interacts with the host receptor leading to virus endocytosis. Its function is as follows. Forms the virion spikes together with glycoprotein G1. The glycoprotein spike trimers are connected to the underlying matrix. Class I viral fusion protein that directs fusion of viral and host endosomal membranes, leading to delivery of the nucleocapsid into the cytoplasm. Membrane fusion is mediated by irreversible conformational changes induced by acidification. In Tacaribe virus (strain Franze-Fernandez) (TCRV), this protein is Pre-glycoprotein polyprotein GP complex.